Consider the following 426-residue polypeptide: D-tagatose-1,6-bisphosphate aldolase subunit KbaZ (426 aa).

Belongs to the GatZ/KbaZ family. KbaZ subfamily. In terms of assembly, forms a complex with KbaY.

It participates in carbohydrate metabolism; D-tagatose 6-phosphate degradation; D-glyceraldehyde 3-phosphate and glycerone phosphate from D-tagatose 6-phosphate: step 2/2. Its function is as follows. Component of the tagatose-1,6-bisphosphate aldolase KbaYZ that is required for full activity and stability of the Y subunit. Could have a chaperone-like function for the proper and stable folding of KbaY. When expressed alone, KbaZ does not show any aldolase activity. This Escherichia coli O17:K52:H18 (strain UMN026 / ExPEC) protein is D-tagatose-1,6-bisphosphate aldolase subunit KbaZ.